The chain runs to 1480 residues: MQRSPLEKASVVSKLFFSWTRPILKKGYRQRLELSDIYQIPSANSADNLSEKLEREWDRELASKKNPKLINALRRCFFWRFMFYGILLYLGEVTKAVQPLLLGRIIASYDPDNKTERSIAIYLGIGLCLLFIVRTLLLHPAIFGLHHIGMQMRIAMFSLIYKKTLKLSSRVLDKISIGQLVSLLSNNLNKFDEGLALAHFVWIAPLQVALLMGLIWELLQASAFCGLGFLIVLALFQAGLGRMMMKYRDQRAGKINERLVITSEMIENIQSVKAYCWEEAMEKMIENLRQTELKLTRKAAYVRYFNSSAFFFSGFFVVFLSVLPYALIKGIVLRKIFTTISFCIVLRMAVTRQFPWAVQTWYDSLGAINKIQDFLQKQEYKTLEYNLTTTEVVMENVTAFWEEGFGELFEKAKQNSNNRKTSNGDDNLFFSNFSLLGTPVLKDINFKIERGQLLAVAGSTGAGKTSLLMMIMGELEPSEGKIKHSGRISFCSQFSWIMPGTIKENIIFGVSYDEYRYRSVIKACQLEEDISKFAAKDNIVLGEGGITLSGGQRARISLARAVYKDADLYLLDSPFGYLDVLTEKEIFESCVCKLMANKTRILVTSKMEHLKKADKILILHEGSSYFYGTFSELQNLRPDFSSKLMGYDSFDQFSSERRNSILTETLRRFSLEGDAPVSWTETKKQSFKQTGELGDKRKNSILNSINSIRKFSIVQKTPLQMNGIEENSDEPLERRLSLVPDSEQGEAILPRISVINTGPALQLRRRQSVLNMMTHSVNQGQSVHRKTTASTRKVSLAPQANLTELDIYSRRLSQETGLEISEEINEEDLKECFFDNMESIPAVTTWNTYLRYITLHKSLIFVLIWCLVIFLAEVAASLVVLWFLGNTPFQDKGNSTYSRNNSYAVIITNTSSYYVFYIYVGVADTLLALGFFRGLPLVHTLITVSKILHHKMLHSVLQAPMSTLNTLKAGGILNRFSKDIAILDDLLPLTIFDFIQLLLIVIGAIAVVSVLQPYILLATVPVIAAFILLRAYFLQTSQQLKQLESAGRSPIFTHLVTSLKGLWTIRAFGRQPYFETLFHKALNLHTANWFLYLATLRWFQMRIEIIFVIFFIAVTFISILTTGEGEGTVGIILTLAMNIMSTLQWAVNSSIDVDSLMRSVSRVFKFIDMPTEGKPTKSTKAYKNGQLSKVMIIENSHVKKNDIWPSGGQMTIKDLTAKYIEGGNAILENISFSISPGQRVGLLGRTGSGKSTLLSAFLRLLNTEGEIQIDGVSWDSITLQQWRKAFGVIPQKVFIFTGTFRKNLDPYEQWSDQEIWKVADEVGLRSVIEQFPGKLDFVLVDGGCVLSHGHKQLMCLARSVLSKAKILLLDEPSAHLDPVTYQIIRRALKQAFADCTVILCEHRIEAMLECQQFLVIEENKVRQYDSIQKLLNEKSLFQQAISHSDRVKLFPHRNSSKYKSPPQIASLKEETEEEVQETRL.

Topologically, residues 1–77 (MQRSPLEKAS…KLINALRRCF (77 aa)) are cytoplasmic. The chain crosses the membrane as a helical span at residues 78–98 (FWRFMFYGILLYLGEVTKAVQ). An ABC transmembrane type-1 1 domain is found at 81–365 (FMFYGILLYL…WAVQTWYDSL (285 aa)). The Extracellular portion of the chain corresponds to 99-122 (PLLLGRIIASYDPDNKTERSIAIY). Residues 123–146 (LGIGLCLLFIVRTLLLHPAIFGLH) traverse the membrane as a helical segment. At 147-195 (HIGMQMRIAMFSLIYKKTLKLSSRVLDKISIGQLVSLLSNNLNKFDEGL) the chain is on the cytoplasmic side. The helical transmembrane segment at 196-216 (ALAHFVWIAPLQVALLMGLIW) threads the bilayer. Residues 217 to 222 (ELLQAS) lie on the Extracellular side of the membrane. The chain crosses the membrane as a helical span at residues 223-243 (AFCGLGFLIVLALFQAGLGRM). Residues 244–298 (MMKYRDQRAGKINERLVITSEMIENIQSVKAYCWEEAMEKMIENLRQTELKLTRK) lie on the Cytoplasmic side of the membrane. Residues 299–319 (AAYVRYFNSSAFFFSGFFVVF) form a helical membrane-spanning segment. The Extracellular portion of the chain corresponds to 320–339 (LSVLPYALIKGIVLRKIFTT). A helical transmembrane segment spans residues 340–358 (ISFCIVLRMAVTRQFPWAV). At 359 to 858 (QTWYDSLGAI…YLRYITLHKS (500 aa)) the chain is on the cytoplasmic side. ATP-binding positions include Trp-401, Ser-434, 458-465 (GSTGAGKT), and Gln-493. The 224-residue stretch at 423-646 (NGDDNLFFSN…RPDFSSKLMG (224 aa)) folds into the ABC transporter 1 domain. A lipid anchor (S-palmitoyl cysteine) is attached at Cys-524. 2 positions are modified to phosphoserine: Ser-549 and Ser-660. A disordered R region region spans residues 654 to 831 (SSERRNSILT…EEINEEDLKE (178 aa)). Position 670 is a phosphoserine; by PKA (Ser-670). A Phosphoserine modification is found at Ser-686. A Glycyl lysine isopeptide (Lys-Gly) (interchain with G-Cter in ubiquitin) cross-link involves residue Lys-688. Phosphoserine is present on residues Ser-700 and Ser-712. Residue Thr-717 is modified to Phosphothreonine. A phosphoserine mark is found at Ser-737, Ser-753, Ser-768, Ser-790, Ser-795, and Ser-813. A helical transmembrane segment spans residues 859–879 (LIFVLIWCLVIFLAEVAASLV). Positions 859 to 1155 (LIFVLIWCLV…AVNSSIDVDS (297 aa)) constitute an ABC transmembrane type-1 2 domain. Over 880-918 (VLWFLGNTPFQDKGNSTYSRNNSYAVIITNTSSYYVFYI) the chain is Extracellular. N-linked (GlcNAc...) asparagine glycosylation is found at Asn-894, Asn-900, and Asn-909. A discontinuously helical membrane pass occupies residues 919–939 (YVGVADTLLALGFFRGLPLVH). Topologically, residues 940-990 (TLITVSKILHHKMLHSVLQAPMSTLNTLKAGGILNRFSKDIAILDDLLPLT) are cytoplasmic. A helical membrane pass occupies residues 991–1011 (IFDFIQLLLIVIGAIAVVSVL). Residues 1012–1013 (QP) are Extracellular-facing. Residues 1014-1034 (YILLATVPVIAAFILLRAYFL) traverse the membrane as a helical segment. At 1035–1095 (QTSQQLKQLE…TANWFLYLAT (61 aa)) the chain is on the cytoplasmic side. A helical membrane pass occupies residues 1096 to 1116 (LRWFQMRIEIIFVIFFIAVTF). Residues 1117 to 1130 (ISILTTGEGEGTVG) lie on the Extracellular side of the membrane. The helical transmembrane segment at 1131–1151 (IILTLAMNIMSTLQWAVNSSI) threads the bilayer. Residues 1152–1480 (DVDSLMRSVS…TEEEVQETRL (329 aa)) lie on the Cytoplasmic side of the membrane. Positions 1210 to 1443 (MTIKDLTAKY…KSLFQQAISH (234 aa)) constitute an ABC transporter 2 domain. ATP contacts are provided by residues Tyr-1219 and 1244–1251 (GRTGSGKS). The segment at 1386-1480 (RALKQAFADC…TEEEVQETRL (95 aa)) is interaction with GORASP2. A lipid anchor (S-palmitoyl cysteine) is attached at Cys-1395. Phosphoserine is present on residues Ser-1444 and Ser-1456. A disordered region spans residues 1452 to 1480 (HRNSSKYKSPPQIASLKEETEEEVQETRL). A compositionally biased stretch (acidic residues) spans 1470–1480 (ETEEEVQETRL). The PDZ-binding signature appears at 1478 to 1480 (TRL).

Belongs to the ABC transporter superfamily. ABCC family. CFTR transporter (TC 3.A.1.202) subfamily. In terms of assembly, monomer; does not require oligomerization for channel activity. May form oligomers in the membrane. Interacts with SLC26A3, SLC26A6 and NHERF1. Interacts with SHANK2. Interacts with MYO6. Interacts (via C-terminus) with GOPC (via PDZ domain); this promotes CFTR internalization and thereby decreases channel activity. Interacts with SLC4A7 through NHERF1. Found in a complex with MYO5B and RAB11A. Interacts with ANO1. Interacts with SLC26A8. Interacts with AHCYL1; the interaction increases CFTR activity. Interacts with CSE1L. The core-glycosylated form interacts with GORASP2 (via PDZ GRASP-type 1 domain) in respone to ER stress. Interacts with MARCHF2; the interaction leads to CFTR ubiqtuitination and degradation. Interacts with ADGRG2. In terms of processing, N-glycosylated. Post-translationally, phosphorylated; cAMP treatment promotes phosphorylation and activates the channel. Dephosphorylation decreases the ATPase activity (in vitro). Phosphorylation at PKA sites activates the channel. Phosphorylation at PKC sites enhances the response to phosphorylation by PKA. Phosphorylated by AMPK; this inhibits channel activity. Ubiquitinated, leading to its degradation in the lysosome. Deubiquitination by USP10 in early endosomes enhances its endocytic recycling to the cell membrane. Ubiquitinated by RNF185 during ER stress. Ubiquitinated by MARCHF2.

Its subcellular location is the apical cell membrane. It is found in the early endosome membrane. The protein resides in the cell membrane. The protein localises to the recycling endosome membrane. It localises to the endoplasmic reticulum membrane. Its subcellular location is the nucleus. The catalysed reaction is ATP + H2O + closed Cl(-) channel = ADP + phosphate + open Cl(-) channel.. It catalyses the reaction chloride(in) = chloride(out). It carries out the reaction hydrogencarbonate(in) = hydrogencarbonate(out). The enzyme catalyses ATP + H2O = ADP + phosphate + H(+). Functionally, epithelial ion channel that plays an important role in the regulation of epithelial ion and water transport and fluid homeostasis. Mediates the transport of chloride ions across the cell membrane. Possesses an intrinsic ATPase activity and utilizes ATP to gate its channel; the passive flow of anions through the channel is gated by cycles of ATP binding and hydrolysis by the ATP-binding domains. The ion channel is also permeable to HCO(3)(-); selectivity depends on the extracellular chloride concentration. Exerts its function also by modulating the activity of other ion channels and transporters. Contributes to the regulation of the pH and the ion content of the epithelial fluid layer. Modulates the activity of the epithelial sodium channel (ENaC) complex, in part by regulating the cell surface expression of the ENaC complex. May regulate bicarbonate secretion and salvage in epithelial cells by regulating the transporter SLC4A7. Can inhibit the chloride channel activity of ANO1. Plays a role in the chloride and bicarbonate homeostasis during sperm epididymal maturation and capacitation. In Ateles geoffroyi (Black-handed spider monkey), this protein is Cystic fibrosis transmembrane conductance regulator.